The following is a 300-amino-acid chain: tRNA dimethylallyltransferase (300 aa).

18–25 (GPTATGKS) contributes to the ATP binding site. 20–25 (TATGKS) lines the substrate pocket. Residues 43–46 (DSRQ) are interaction with substrate tRNA.

This sequence belongs to the IPP transferase family. In terms of assembly, monomer. The cofactor is Mg(2+).

It catalyses the reaction adenosine(37) in tRNA + dimethylallyl diphosphate = N(6)-dimethylallyladenosine(37) in tRNA + diphosphate. Its function is as follows. Catalyzes the transfer of a dimethylallyl group onto the adenine at position 37 in tRNAs that read codons beginning with uridine, leading to the formation of N6-(dimethylallyl)adenosine (i(6)A). The chain is tRNA dimethylallyltransferase from Cyanothece sp. (strain PCC 7425 / ATCC 29141).